Reading from the N-terminus, the 954-residue chain is Major inner capsid protein VP2 (954 aa).

Over residues 1-15 (MPRKKEQASKSENEK) the composition is skewed to basic and acidic residues. Residues 1 to 29 (MPRKKEQASKSENEKQTSNVQAQDFKTAI) form a disordered region. Over residues 16-29 (QTSNVQAQDFKTAI) the composition is skewed to polar residues.

It is found in the virion. In terms of biological role, self-assembles to form an icosahedral capsid with a pseudo T=2 symmetry, about 60 nm in diameter, and consisting of 120 VP2 subunits. In Banna virus (BAV), this protein is Major inner capsid protein VP2 (Segment-2).